Reading from the N-terminus, the 283-residue chain is MATGAANVESPQSLPLRLLGRVALVTGGSSGIGESIVLLFRKHGAKVCIADVQDNQGQRLCETLGGSSDIAFCHCDVTIEDDVKRAVDFTVDKFGTLDIMVNNAGVSGPPCPDIRDFELSAFDRVFDINVRGVFIGMKHAARIMIPAKKGSIISISSVASTMGGLGPHAYTGSKHAVLGLTKNVAAELGKHGIRVNCVSPYAVATSLALAHLPEAERTEDTWDDFRRFVADNANLQGVELTMEDVANAVVFLASDEARYVSGMNLMVDGGFTSTNHALQVFRP.

NAD(+) contacts are provided by residues 27–33 (GGSSGIG), Asp51, 76–77 (DV), and 103–105 (NAG). Ser157 (proton donor) is an active-site residue. NAD(+) contacts are provided by Tyr170, Lys174, and Thr205. Tyr170 serves as the catalytic Proton acceptor. The Proton donor/acceptor role is filled by Lys174.

Belongs to the short-chain dehydrogenases/reductases (SDR) family.

It carries out the reaction (1R,2S,4R)-borneol + NAD(+) = (1R,4R)-camphor + NADH + H(+). Functionally, involved in the biosynthesis of monoterpene natural products related to camphor. Catalayzes the oxidation of (+)-borneol to (+)-camphor. Shows absolute selectivity towards (+)-borneol. Catalyzes the oxidation of (+)-isoborneol to (-)-camphor. Shows absolute selectivity towards (+)-isoborneol. The polypeptide is (+)-borneol dehydrogenase 2 (Salvia officinalis (Sage)).